Here is a 1732-residue protein sequence, read N- to C-terminus: Serine/threonine-protein kinase MRCK alpha (1732 aa).

In terms of domain architecture, Protein kinase spans 77–343 (FEILKVIGRG…IEDFKKHPFF (267 aa)). Residues 83–91 (IGRGAFGEV) and lysine 106 contribute to the ATP site. Aspartate 201 serves as the catalytic Proton acceptor. 2 positions are modified to phosphoserine; by autocatalysis: serine 222 and serine 234. Threonine 240 is modified (phosphothreonine; by autocatalysis). In terms of domain architecture, AGC-kinase C-terminal spans 344-414 (SGIDWDNIRN…TSSCVLSDRS (71 aa)). 2 coiled-coil regions span residues 437-820 (NNLA…WEAQ) and 880-943 (LELQ…SEKG). The tract at residues 968–1003 (ERSPSCTPASKGRRTVDSTPLSVHTPTLRKKGCPGS) is disordered. The Phorbol-ester/DAG-type zinc-finger motif lies at 1012-1062 (THQFFVKSFTTPTKCHQCTSLMVGLIRQGCSCEVCGFSCHITCVNKAPTTC). Residues 1082-1201 (GTAYEGHVRI…WVGVLSELHK (120 aa)) enclose the PH domain. Serine 1127 carries the post-translational modification Phosphoserine. The CNH domain maps to 1227–1499 (IKTTQAAAII…RPLNNEGSLN (273 aa)). Serine 1545 is modified (phosphoserine). The region spanning 1571 to 1584 (ISNPTNFNHIAHMG) is the CRIB domain. The tract at residues 1591–1732 (ILKDLPMNPR…ESTDRGSWDP (142 aa)) is disordered. Residues 1604 to 1619 (SRTVFSGSVSIPSITK) show a composition bias toward polar residues. Residues serine 1611, serine 1613, serine 1629, serine 1651, serine 1664, serine 1669, and serine 1693 each carry the phosphoserine modification. The segment covering 1625–1640 (GRSMSASSGLSARSSA) has biased composition (low complexity). Low complexity predominate over residues 1665 to 1674 (PSEGSLSSGG). Positions 1697–1707 (STASNSSNLSS) are enriched in low complexity. Serine 1719 and serine 1721 each carry phosphoserine.

The protein belongs to the protein kinase superfamily. AGC Ser/Thr protein kinase family. DMPK subfamily. In terms of assembly, homodimer and homotetramer via the coiled coil regions. Interacts tightly with GTP-bound but not GDP-bound CDC42. Forms a tripartite complex with MYO18A and LURAP1 with the latter acting as an adapter connecting CDC42BPA and MYO18A. LURAP1 binding results in activation of CDC42BPA by abolition of its negative autoregulation. Interacts with LURAP1. Interacts (via AGC-kinase C-terminal domain) with FAM89B/LRAP25 (via LRR repeat). Forms a tripartite complex with FAM89B/LRAP25 and LIMK1. Mg(2+) serves as cofactor. Proteolytically cleaved by caspases upon apoptosis induction. The cleavage at Asp-478 by CASP3 increases its kinase activity (in vitro). As to expression, abundant in the heart, brain, skeletal muscle, kidney, and pancreas, with little or no expression in the lung and liver.

It localises to the cytoplasm. Its subcellular location is the cell projection. It is found in the lamellipodium. It carries out the reaction L-seryl-[protein] + ATP = O-phospho-L-seryl-[protein] + ADP + H(+). It catalyses the reaction L-threonyl-[protein] + ATP = O-phospho-L-threonyl-[protein] + ADP + H(+). With respect to regulation, maintained in an inactive, closed conformation by an interaction between the kinase domain and the negative autoregulatory C-terminal coiled-coil region. Agonist binding to the phorbol ester binding site disrupts this, releasing the kinase domain to allow N-terminus-mediated dimerization and kinase activation by transautophosphorylation. Inhibited by chelerythrine chloride. Its function is as follows. Serine/threonine-protein kinase which is an important downstream effector of CDC42 and plays a role in the regulation of cytoskeleton reorganization and cell migration. Regulates actin cytoskeletal reorganization via phosphorylation of PPP1R12C and MYL9/MLC2. In concert with MYO18A and LURAP1, is involved in modulating lamellar actomyosin retrograde flow that is crucial to cell protrusion and migration. Phosphorylates: PPP1R12A, LIMK1 and LIMK2. May play a role in TFRC-mediated iron uptake. In concert with FAM89B/LRAP25 mediates the targeting of LIMK1 to the lamellipodium resulting in its activation and subsequent phosphorylation of CFL1 which is important for lamellipodial F-actin regulation. Triggers the formation of an extrusion apical actin ring required for epithelial extrusion of apoptotic cells. The chain is Serine/threonine-protein kinase MRCK alpha from Homo sapiens (Human).